The chain runs to 250 residues: 1-(5-phosphoribosyl)-5-[(5-phosphoribosylamino)methylideneamino] imidazole-4-carboxamide isomerase (250 aa).

Catalysis depends on Asp-8, which acts as the Proton acceptor. Asp-131 serves as the catalytic Proton donor.

It belongs to the HisA/HisF family.

The protein localises to the cytoplasm. The enzyme catalyses 1-(5-phospho-beta-D-ribosyl)-5-[(5-phospho-beta-D-ribosylamino)methylideneamino]imidazole-4-carboxamide = 5-[(5-phospho-1-deoxy-D-ribulos-1-ylimino)methylamino]-1-(5-phospho-beta-D-ribosyl)imidazole-4-carboxamide. It functions in the pathway amino-acid biosynthesis; L-histidine biosynthesis; L-histidine from 5-phospho-alpha-D-ribose 1-diphosphate: step 4/9. The protein is 1-(5-phosphoribosyl)-5-[(5-phosphoribosylamino)methylideneamino] imidazole-4-carboxamide isomerase of Paraburkholderia xenovorans (strain LB400).